Consider the following 216-residue polypeptide: Large ribosomal subunit protein uL3 (216 aa).

The tract at residues 134 to 153 (RATHGNSRSHNVPGSIGMAQ) is disordered. Q153 is subject to N5-methylglutamine.

This sequence belongs to the universal ribosomal protein uL3 family. Part of the 50S ribosomal subunit. Forms a cluster with proteins L14 and L19. Methylated by PrmB.

Functionally, one of the primary rRNA binding proteins, it binds directly near the 3'-end of the 23S rRNA, where it nucleates assembly of the 50S subunit. In Cupriavidus taiwanensis (strain DSM 17343 / BCRC 17206 / CCUG 44338 / CIP 107171 / LMG 19424 / R1) (Ralstonia taiwanensis (strain LMG 19424)), this protein is Large ribosomal subunit protein uL3.